A 343-amino-acid polypeptide reads, in one-letter code: Probable fructokinase-7 (343 aa).

Glycine 2 is subject to N-acetylglycine.

This sequence belongs to the carbohydrate kinase PfkB family.

It catalyses the reaction D-fructose + ATP = D-fructose 6-phosphate + ADP + H(+). It functions in the pathway glycan biosynthesis; starch biosynthesis. May play an important role in maintaining the flux of carbon towards starch formation. The polypeptide is Probable fructokinase-7 (Arabidopsis thaliana (Mouse-ear cress)).